The chain runs to 526 residues: Fatty-acid amide hydrolase 2-B (526 aa).

Residues 12 to 32 (CLLVLVSGLFLALFRLLSPGT) form a helical membrane-spanning segment. Active-site charge relay system residues include Lys-128 and Ser-203. The active-site Acyl-ester intermediate is the Ser-227.

It belongs to the amidase family.

Its subcellular location is the membrane. It carries out the reaction N-(5Z,8Z,11Z,14Z-eicosatetraenoyl)-ethanolamine + H2O = ethanolamine + (5Z,8Z,11Z,14Z)-eicosatetraenoate. The catalysed reaction is (9Z)-octadecenamide + H2O = (9Z)-octadecenoate + NH4(+). This chain is Fatty-acid amide hydrolase 2-B (faah2b), found in Danio rerio (Zebrafish).